A 104-amino-acid polypeptide reads, in one-letter code: Small ribosomal subunit protein bS18c (104 aa).

Belongs to the bacterial ribosomal protein bS18 family. As to quaternary structure, part of the 30S ribosomal subunit.

The protein resides in the plastid. Its subcellular location is the chloroplast. This Lotus japonicus (Lotus corniculatus var. japonicus) protein is Small ribosomal subunit protein bS18c.